Consider the following 437-residue polypeptide: Proton/glutamate-aspartate symporter (437 aa).

Residues 1–5 lie on the Cytoplasmic side of the membrane; it reads MKNIK. A helical transmembrane segment spans residues 6–26; the sequence is FSLAWQILFAMVLGILLGSYL. Residues 27–50 are Periplasmic-facing; that stretch reads HYHSDSRDWLVVNLLSPAGDIFIH. Residues 51 to 71 traverse the membrane as a helical segment; the sequence is LIKMIVVPIVISTLVVGIAGV. Topologically, residues 72–84 are cytoplasmic; sequence GDAKQLGRIGAKT. The chain crosses the membrane as a helical span at residues 85-105; the sequence is IIYFEVITTVAIILGITLANV. Residues 106–159 are Periplasmic-facing; that stretch reads FQPGAGVDMSQLATVDISKYQSTTEAVQSSSHGIMGTILSLVPTNIVASMAKGE. The helical transmembrane segment at 160–180 threads the bilayer; sequence MLPIIFFSVLFGLGLSSLPAT. At 181–210 the chain is on the cytoplasmic side; it reads HREPLVTVFRSISETMFKVTHMVMRYAPVG. A helical membrane pass occupies residues 211–231; it reads VFALIAVTVANFGFSSLWPLA. Lys-232 is a topological domain (periplasmic). The helical transmembrane segment at 233-253 threads the bilayer; that stretch reads LVLLVHFAILFFALVVLGIVA. Over 254–292 the chain is Cytoplasmic; that stretch reads RLCGLSVWILIRILKDELILAYSTASSESVLPRIIEKME. The helical transmembrane segment at 293–313 threads the bilayer; the sequence is AYGAPVSITSFVVPTGYSFNL. Topologically, residues 314 to 324 are periplasmic; the sequence is DGSTLYQSIAA. A helical transmembrane segment spans residues 325–345; that stretch reads IFIAQLYGIDLSIWQEIILVL. Residues 346–361 lie on the Cytoplasmic side of the membrane; sequence TLMVTSKGIAGVPGVS. Residues 362 to 382 traverse the membrane as a helical segment; that stretch reads FVVLLATLGSVGIPLEGLAFI. Over 383–387 the chain is Periplasmic; that stretch reads AGVDR. A helical membrane pass occupies residues 388 to 408; sequence ILDMARTALNVVGNALAVLVI. Over 409 to 437 the chain is Cytoplasmic; the sequence is AKWEHKFDRKKALAYEREVLGKFDKTADQ.

Belongs to the dicarboxylate/amino acid:cation symporter (DAACS) (TC 2.A.23) family. GltP subfamily.

It localises to the cell inner membrane. Glutamate uptake is inhibited by L-cysteate and beta-hydroxyaspartate. Inhibited by the uncoupler carbonylcyanide m-chlorophenylhydrazone (CCCP). In terms of biological role, catalyzes the proton-dependent, binding-protein-independent transport of glutamate and aspartate. The polypeptide is Proton/glutamate-aspartate symporter (Escherichia coli (strain K12)).